Reading from the N-terminus, the 499-residue chain is Glucooligosaccharide oxidase (499 aa).

Residues 1–25 (MVRIQELTAALSLASVVQASWIQKR) form the signal peptide. The cysteines at positions 31 and 80 are disulfide-linked. The 173-residue stretch at 58-230 (VDYDPAAIAI…SEFEFNTFEA (173 aa)) folds into the FAD-binding PCMH-type domain. The segment at residues 95–155 (HSYGSYGFGG…GNRALSHGTC (61 aa)) is a cross-link (6-(S-cysteinyl)-8alpha-(pros-histidyl)-FAD (His-Cys)). Substrate is bound by residues Y97, T154, and R270. Residues N330 and N366 are each glycosylated (N-linked (GlcNAc...) asparagine). Positions 378 and 409 each coordinate substrate. A glycan (N-linked (GlcNAc...) asparagine) is linked at N419. Y454 contributes to the substrate binding site. The active-site Proton acceptor is Y454.

This sequence belongs to the oxygen-dependent FAD-linked oxidoreductase family. The cofactor is FAD. Post-translationally, the FAD cofactor is bound via a bicovalent 6-S-cysteinyl, 8alpha-N1-histidyl FAD linkage.

The protein localises to the secreted. The catalysed reaction is beta-lactose + O2 = lactobiono-1,5-lactone + H2O2. It carries out the reaction D-cellobiose + O2 = D-cellobiono-1,5-lactone + H2O2. The enzyme catalyses D-cellotriose + O2 = D-cellotriono-1,5-lactone + H2O2. It catalyses the reaction D-cellotetraose + O2 = D-cellotetraono-1,5-lactone + H2O2. The catalysed reaction is D-cellopentaose + O2 = D-cellopentaono-1,5-lactone + H2O2. It carries out the reaction D-cellohexaose + O2 = D-cellohexaono-1,5-lactone + H2O2. In terms of biological role, catalyzes the selective oxidation of C1 hydroxyl moieties on mono- and disaccharides with concomitant reduction of molecular oxygen to hydrogen peroxide. This results in the formation of the corresponding lactones, which typically undergo spontaneous hydrolysis. Glucooligosaccharide oxidase is able to oxidize the monosaccharide D-glucose as well as the disaccharides maltose, cellobiose, and lactose. In addition, it shows high selectivity for cello- and maltooligosaccharides, indicating that glucooligosaccharide oxidase prefers oligosaccharides with a beta-D-glucosyl unit on the reducing end and additional sugar units linked by alpha- or beta-1,4 glucosidic bonds. The protein is Glucooligosaccharide oxidase (gluO) of Sarocladium strictum (Black bundle disease fungus).